Here is a 509-residue protein sequence, read N- to C-terminus: Maturase K (509 aa).

This sequence belongs to the intron maturase 2 family. MatK subfamily.

It is found in the plastid. The protein resides in the chloroplast. Usually encoded in the trnK tRNA gene intron. Probably assists in splicing its own and other chloroplast group II introns. This Solanum lycopersicum (Tomato) protein is Maturase K.